The sequence spans 171 residues: Large ribosomal subunit protein uL10 (171 aa).

The protein belongs to the universal ribosomal protein uL10 family. In terms of assembly, part of the ribosomal stalk of the 50S ribosomal subunit. The N-terminus interacts with L11 and the large rRNA to form the base of the stalk. The C-terminus forms an elongated spine to which L12 dimers bind in a sequential fashion forming a multimeric L10(L12)X complex.

Forms part of the ribosomal stalk, playing a central role in the interaction of the ribosome with GTP-bound translation factors. This chain is Large ribosomal subunit protein uL10, found in Paramagnetospirillum magneticum (strain ATCC 700264 / AMB-1) (Magnetospirillum magneticum).